Here is a 430-residue protein sequence, read N- to C-terminus: Adenylosuccinate synthetase (430 aa).

Residues 12 to 18 (GDEGKGK) and 40 to 42 (GHT) contribute to the GTP site. D13 acts as the Proton acceptor in catalysis. D13 and G40 together coordinate Mg(2+). Residues 13-16 (DEGK), 38-41 (NAGH), T128, R142, Q223, T238, and R302 each bind IMP. H41 functions as the Proton donor in the catalytic mechanism. Position 298–304 (298–304 (TTTGRPR)) interacts with substrate. GTP-binding positions include R304, 330-332 (SID), and 413-415 (SVG).

The protein belongs to the adenylosuccinate synthetase family. Homodimer. The cofactor is Mg(2+).

It is found in the cytoplasm. The enzyme catalyses IMP + L-aspartate + GTP = N(6)-(1,2-dicarboxyethyl)-AMP + GDP + phosphate + 2 H(+). It functions in the pathway purine metabolism; AMP biosynthesis via de novo pathway; AMP from IMP: step 1/2. Plays an important role in the de novo pathway of purine nucleotide biosynthesis. Catalyzes the first committed step in the biosynthesis of AMP from IMP. This Lactococcus lactis subsp. lactis (strain IL1403) (Streptococcus lactis) protein is Adenylosuccinate synthetase.